A 320-amino-acid polypeptide reads, in one-letter code: uncharacterized protein (320 aa).

The FHA domain occupies 22 to 86; sequence KTIGRSSSFD…IRDLNNKTGT (65 aa). Residues 242-264 form a disordered region; that stretch reads TDTDTTEEKEEEEEKEEGDDEEG.

This is an uncharacterized protein from Saccharomyces cerevisiae (strain ATCC 204508 / S288c) (Baker's yeast).